A 201-amino-acid polypeptide reads, in one-letter code: Small ribosomal subunit protein uS10m (201 aa).

It belongs to the universal ribosomal protein uS10 family. As to quaternary structure, component of the mitochondrial small ribosomal subunit (mt-SSU). Mature mammalian 55S mitochondrial ribosomes consist of a small (28S) and a large (39S) subunit. The 28S small subunit contains a 12S ribosomal RNA (12S mt-rRNA) and 30 different proteins. The 39S large subunit contains a 16S rRNA (16S mt-rRNA), a copy of mitochondrial valine transfer RNA (mt-tRNA(Val)), which plays an integral structural role, and 52 different proteins.

Its subcellular location is the mitochondrion. The sequence is that of Small ribosomal subunit protein uS10m (MRPS10) from Homo sapiens (Human).